Reading from the N-terminus, the 441-residue chain is uncharacterized protein (441 aa).

The first 23 residues, 1 to 23 (MSRKYLLSLLLVGALVISVVASG), serve as a signal peptide directing secretion. Cysteine 24 bears the N-acetylcysteine mark. Cysteine 24 carries the S-archaeol cysteine lipid modification.

This sequence belongs to the bacterial solute-binding protein 1 family.

Its subcellular location is the cell membrane. Probably part of a binding-protein-dependent transport system PH1214/15/16. This is an uncharacterized protein from Pyrococcus horikoshii (strain ATCC 700860 / DSM 12428 / JCM 9974 / NBRC 100139 / OT-3).